The primary structure comprises 68 residues: Large ribosomal subunit protein bL35 (68 aa).

A compositionally biased stretch (basic residues) spans 1–25 (MGTKIKTHKGTKKRFRLSAKGKAMH). Positions 1-43 (MGTKIKTHKGTKKRFRLSAKGKAMHRQSGTSHLAKGLSKKRRR) are disordered.

The protein belongs to the bacterial ribosomal protein bL35 family.

The sequence is that of Large ribosomal subunit protein bL35 from Rhodopirellula baltica (strain DSM 10527 / NCIMB 13988 / SH1).